Reading from the N-terminus, the 116-residue chain is Ribosome-binding factor A (116 aa).

Belongs to the RbfA family. In terms of assembly, monomer. Binds 30S ribosomal subunits, but not 50S ribosomal subunits or 70S ribosomes.

It localises to the cytoplasm. One of several proteins that assist in the late maturation steps of the functional core of the 30S ribosomal subunit. Associates with free 30S ribosomal subunits (but not with 30S subunits that are part of 70S ribosomes or polysomes). Required for efficient processing of 16S rRNA. May interact with the 5'-terminal helix region of 16S rRNA. The polypeptide is Ribosome-binding factor A (Streptococcus mutans serotype c (strain ATCC 700610 / UA159)).